Reading from the N-terminus, the 509-residue chain is Bifunctional purine biosynthesis protein PurH (509 aa).

The MGS-like domain occupies M1 to V144.

Belongs to the PurH family.

It carries out the reaction (6R)-10-formyltetrahydrofolate + 5-amino-1-(5-phospho-beta-D-ribosyl)imidazole-4-carboxamide = 5-formamido-1-(5-phospho-D-ribosyl)imidazole-4-carboxamide + (6S)-5,6,7,8-tetrahydrofolate. It catalyses the reaction IMP + H2O = 5-formamido-1-(5-phospho-D-ribosyl)imidazole-4-carboxamide. It participates in purine metabolism; IMP biosynthesis via de novo pathway; 5-formamido-1-(5-phospho-D-ribosyl)imidazole-4-carboxamide from 5-amino-1-(5-phospho-D-ribosyl)imidazole-4-carboxamide (10-formyl THF route): step 1/1. It functions in the pathway purine metabolism; IMP biosynthesis via de novo pathway; IMP from 5-formamido-1-(5-phospho-D-ribosyl)imidazole-4-carboxamide: step 1/1. This is Bifunctional purine biosynthesis protein PurH from Listeria monocytogenes serovar 1/2a (strain ATCC BAA-679 / EGD-e).